The following is a 1148-amino-acid chain: Autophagy-related protein 11 (1148 aa).

The AIM (Atg8-family-interacting motif) motif lies at 567–570; the sequence is FDDI. Basic and acidic residues predominate over residues 699-710; the sequence is KAEASSDVEGNK. Disordered regions lie at residues 699–727, 754–777, and 784–803; these read KAEA…CVSN, PLDS…EAGE, and NSST…ATGR. Polar residues-rich tracts occupy residues 754–767 and 784–793; these read PLDS…QNNE and NSSTAESPQK. 2 coiled-coil regions span residues 816–868 and 956–996; these read ELRN…HLEN and DKVS…VKTL. T851 is modified (phosphothreonine). Residues 1130-1133 carry the AIM (Atg8-family-interacting motif) motif; it reads YFIV.

Belongs to the ATG11 family. Homodimer. Interacts with ATG8E, ATG13A and ATG101. Binds to ATG8E on autophagic vesicles.

It is found in the cytoplasmic vesicle. Its subcellular location is the autophagosome. In terms of biological role, accessory protein involved in autophagy. Acts as a scaffold protein of the ATG1-ATG13 complex for faithful delivery of autophagic vesicles to the vacuole. Involved in the stress-induced phosphorylation of ATG1A for turnover of ATG1-ATG13 complex and proper ATG1-ATG13 complex assembly or activity. Required for selective mitophagy. Required for senescence-induced breakdown of mitochondria-resident proteins and mitochondrial vesicles. Seems not essential for ATG8-mediated autophagy. This chain is Autophagy-related protein 11, found in Arabidopsis thaliana (Mouse-ear cress).